The following is a 188-amino-acid chain: MASWLPETLFEIVGQGPAPSKDYYQLLITRTQIIFRWWKISLRSEYRSAKPGETKESHEDFLDNSHLQVQVAVVFGTKILDYVFNLCEGKFDYLERLSDRLLLKIICYLDLEDIASLSQTSSKFEKLCKSDLLWEQIVQSTCDTITPDMRALAKNMGWRQMFLTNNIQLQRQTRKKKQRQENQAEKLA.

The region spanning 91 to 137 is the F-box domain; the sequence is FDYLERLSDRLLLKIICYLDLEDIASLSQTSSKFEKLCKSDLLWEQI.

In terms of assembly, directly interacts with SKP1 and CUL1.

Functionally, substrate-recognition component of the SCF (SKP1-CUL1-F-box protein)-type E3 ubiquitin ligase complex. This Mus musculus (Mouse) protein is F-box only protein 36 (Fbxo36).